The primary structure comprises 201 residues: Recombination protein RecR (201 aa).

A C4-type zinc finger spans residues 60–75; that stretch reads CSCCGNVDTIDPCTVC. Positions 83–178 constitute a Toprim domain; that stretch reads SMIIVVEDVS…KTTRLAHGVP (96 aa).

The protein belongs to the RecR family.

May play a role in DNA repair. It seems to be involved in an RecBC-independent recombinational process of DNA repair. It may act with RecF and RecO. This is Recombination protein RecR from Allorhizobium ampelinum (strain ATCC BAA-846 / DSM 112012 / S4) (Agrobacterium vitis (strain S4)).